Consider the following 859-residue polypeptide: Mycobactin import ATP-binding/permease protein IrtA (859 aa).

Residues Met-1–Pro-292 lie on the Cytoplasmic side of the membrane. The region spanning Ala-15–Asp-122 is the FAD-binding FR-type domain. FAD-binding positions include Arg-70–Thr-73, Asp-87–His-91, and Ala-97–Ser-98. Positions His-247–Ser-267 are disordered. A helical membrane pass occupies residues Leu-293–Leu-313. The 283-residue stretch at Leu-293–Thr-575 folds into the ABC transmembrane type-1 domain. Residues Leu-314–Gly-334 are Periplasmic-facing. The helical transmembrane segment at Phe-335–Leu-355 threads the bilayer. The Cytoplasmic portion of the chain corresponds to His-356 to Ala-408. A helical transmembrane segment spans residues Val-409–Val-429. At Asp-430 to Arg-432 the chain is on the periplasmic side. A helical membrane pass occupies residues Val-433–Ile-453. Over Gln-454–Asp-519 the chain is Cytoplasmic. A helical membrane pass occupies residues Leu-520–Ala-540. Residues Thr-541–Asn-548 lie on the Periplasmic side of the membrane. Residues Leu-549–Gly-569 traverse the membrane as a helical segment. Topologically, residues Leu-570–Arg-859 are cytoplasmic. The 234-residue stretch at Val-610 to Thr-843 folds into the ABC transporter domain. Gly-643 to Ser-650 is a binding site for ATP.

Belongs to the ABC transporter superfamily. Siderophore-Fe(3+) uptake transporter (SIUT) (TC 3.A.1.21) family. In terms of assembly, forms a heterodimer with IrtB. FAD serves as cofactor.

It is found in the cell inner membrane. Its function is as follows. Part of the ABC transporter complex IrtAB involved in the import of iron-bound mycobactin (Fe-MBT) and carboxymycobactin (Fe-cMBT). Mycobactins are then reduced by the siderophore interaction domain to facilitate iron release in the bacterial cell. Transmembrane domains (TMD) form a pore in the membrane and the ATP-binding domain (NBD) is responsible for energy generation. Required for replication in human macrophages and in mouse lungs. The polypeptide is Mycobactin import ATP-binding/permease protein IrtA (irtA) (Mycobacterium tuberculosis (strain ATCC 25618 / H37Rv)).